A 429-amino-acid chain; its full sequence is Serine--tRNA ligase (429 aa).

Residue 235–237 (TAE) coordinates L-serine. 266-268 (RSE) contributes to the ATP binding site. E289 contributes to the L-serine binding site. An ATP-binding site is contributed by 353–356 (EISS). S389 serves as a coordination point for L-serine.

It belongs to the class-II aminoacyl-tRNA synthetase family. Type-1 seryl-tRNA synthetase subfamily. Homodimer. The tRNA molecule binds across the dimer.

The protein resides in the cytoplasm. The catalysed reaction is tRNA(Ser) + L-serine + ATP = L-seryl-tRNA(Ser) + AMP + diphosphate + H(+). The enzyme catalyses tRNA(Sec) + L-serine + ATP = L-seryl-tRNA(Sec) + AMP + diphosphate + H(+). It participates in aminoacyl-tRNA biosynthesis; selenocysteinyl-tRNA(Sec) biosynthesis; L-seryl-tRNA(Sec) from L-serine and tRNA(Sec): step 1/1. Functionally, catalyzes the attachment of serine to tRNA(Ser). Is also able to aminoacylate tRNA(Sec) with serine, to form the misacylated tRNA L-seryl-tRNA(Sec), which will be further converted into selenocysteinyl-tRNA(Sec). The protein is Serine--tRNA ligase of Actinobacillus succinogenes (strain ATCC 55618 / DSM 22257 / CCUG 43843 / 130Z).